The chain runs to 780 residues: Protein SAV (780 aa).

Residues Gly-253 to Thr-260 and Gly-528 to Thr-535 contribute to the ATP site.

It belongs to the AAA ATPase family. CDC48 subfamily.

Not yet known, shows ATPase activity. In Sulfolobus acidocaldarius (strain ATCC 33909 / DSM 639 / JCM 8929 / NBRC 15157 / NCIMB 11770), this protein is Protein SAV (sav).